The chain runs to 543 residues: ADP,ATP carrier protein 3 (543 aa).

10 consecutive transmembrane segments (helical) span residues 46-66 (VLYL…MGNL), 86-106 (IFLP…LSLF), 111-131 (MFDI…LVVW), 175-195 (FLFL…FNIF), 209-229 (ISVY…LTLV), 243-263 (ELGF…ILAL), 306-326 (LLIA…LVEA), 346-366 (FANF…LVVI), 382-402 (LASL…LIAF), and 504-524 (SVSG…LKYL).

Belongs to the ADP/ATP translocase tlc family.

It is found in the mitosome membrane. In terms of biological role, ATP transporter involved in the uptake of ATP from the parasite cell cytoplasm into the mitosome matrix. Equilibrates nucleotide pools across a concentration gradient between both sides of the mitosome membrane. The protein is ADP,ATP carrier protein 3 (NTT3) of Encephalitozoon cuniculi (strain GB-M1) (Microsporidian parasite).